Here is a 568-residue protein sequence, read N- to C-terminus: Autophagy-related protein 18 (568 aa).

The WD 1 repeat unit spans residues 19 to 57 (KPSSSVNFITFNQDGSCIAVGNNKGYSIFTTNPFTKCYD). Polar residues predominate over residues 162 to 171 (STDTSNSADN). The interval 162–210 (STDTSNSADNSGSIGSGPASGSGAGSGSASMTSTDSTPDAQSHSYLAYP) is disordered. A compositionally biased stretch (gly residues) spans 175-187 (IGSGPASGSGAGS). Positions 188–198 (GSASMTSTDST) are enriched in low complexity. WD repeat units follow at residues 268-308 (AHKS…KLYQ) and 313-352 (TYPTKVYSVAFSPDNRYVVTTSASGTVHIFRLGEDESLES). A L/FRRG motif motif is present at residues 309-313 (FRRGT). The tract at residues 350–429 (LESKHKRKRA…ISGMSEDGKE (80 aa)) is disordered. Residues 375 to 394 (DLDDEIEDDGDDSDVDDVES) are compositionally biased toward acidic residues. Residues 405–421 (LSQGSSNSYTSMNSGIS) are compositionally biased toward polar residues. WD repeat units follow at residues 464–508 (DFLP…DMVP) and 518–558 (APAS…GGDC).

The protein belongs to the WD repeat PROPPIN family. In terms of assembly, component of the PI(3,5)P2 regulatory complex.

The protein resides in the preautophagosomal structure membrane. It is found in the vacuole membrane. Its subcellular location is the endosome membrane. The PI(3,5)P2 regulatory complex regulates both the synthesis and turnover of phosphatidylinositol 3,5-bisphosphate (PtdIns(3,5)P2). Necessary for proper vacuole morphology. Plays an important role in osmotically-induced vacuole fragmentation. Required for cytoplasm to vacuole transport (Cvt) vesicle formation, pexophagy and starvation-induced autophagy. Involved in correct ATG9 trafficking to the pre-autophagosomal structure. Might also be involved in premeiotic DNA replication. The sequence is that of Autophagy-related protein 18 (ATG18) from Meyerozyma guilliermondii (strain ATCC 6260 / CBS 566 / DSM 6381 / JCM 1539 / NBRC 10279 / NRRL Y-324) (Yeast).